The primary structure comprises 689 residues: uncharacterized protein (689 aa).

Its subcellular location is the mitochondrion. This is an uncharacterized protein from Schizosaccharomyces pombe (strain 972 / ATCC 24843) (Fission yeast).